The sequence spans 1014 residues: Isoleucine--tRNA ligase (1014 aa).

The short motif at 48-58 is the 'HIGH' region element; it reads PTANGRPGIHH. A 'KMSKS' region motif is present at residues 628 to 632; that stretch reads KMSKS. An ATP-binding site is contributed by Lys-631.

Belongs to the class-I aminoacyl-tRNA synthetase family. IleS type 2 subfamily. In terms of assembly, monomer. The cofactor is Zn(2+).

The protein localises to the cytoplasm. The enzyme catalyses tRNA(Ile) + L-isoleucine + ATP = L-isoleucyl-tRNA(Ile) + AMP + diphosphate. In terms of biological role, catalyzes the attachment of isoleucine to tRNA(Ile). As IleRS can inadvertently accommodate and process structurally similar amino acids such as valine, to avoid such errors it has two additional distinct tRNA(Ile)-dependent editing activities. One activity is designated as 'pretransfer' editing and involves the hydrolysis of activated Val-AMP. The other activity is designated 'posttransfer' editing and involves deacylation of mischarged Val-tRNA(Ile). This is Isoleucine--tRNA ligase from Dehalococcoides mccartyi (strain ATCC BAA-2266 / KCTC 15142 / 195) (Dehalococcoides ethenogenes (strain 195)).